Consider the following 349-residue polypeptide: tRNA uridine(34) hydroxylase (349 aa).

One can recognise a Rhodanese domain in the interval 146 to 240; sequence DDPDAVFIDM…YARRAREQGL (95 aa). Residue Cys-200 is the Cysteine persulfide intermediate of the active site. Basic and acidic residues predominate over residues 316 to 328; sequence EEQRRRRAGRENG. Residues 316–349 form a disordered region; that stretch reads EEQRRRRAGRENGNKIFNKSRGRLNTKLGIPDPE.

The protein belongs to the TrhO family.

The enzyme catalyses uridine(34) in tRNA + AH2 + O2 = 5-hydroxyuridine(34) in tRNA + A + H2O. Functionally, catalyzes oxygen-dependent 5-hydroxyuridine (ho5U) modification at position 34 in tRNAs. The chain is tRNA uridine(34) hydroxylase from Enterobacter sp. (strain 638).